Reading from the N-terminus, the 134-residue chain is DNA-directed RNA polymerase subunit omega (134 aa).

A disordered region spans residues 76-102 (EVDEPEPDPASMIAAGGAAAADSEEQD).

This sequence belongs to the RNA polymerase subunit omega family. As to quaternary structure, the RNAP catalytic core consists of 2 alpha, 1 beta, 1 beta' and 1 omega subunit. When a sigma factor is associated with the core the holoenzyme is formed, which can initiate transcription.

It carries out the reaction RNA(n) + a ribonucleoside 5'-triphosphate = RNA(n+1) + diphosphate. Promotes RNA polymerase assembly. Latches the N- and C-terminal regions of the beta' subunit thereby facilitating its interaction with the beta and alpha subunits. The sequence is that of DNA-directed RNA polymerase subunit omega from Rhizobium etli (strain ATCC 51251 / DSM 11541 / JCM 21823 / NBRC 15573 / CFN 42).